The chain runs to 570 residues: Small ribosomal subunit protein uS2c (570 aa).

Positions 1-306 (MLNKKPPYLI…IKLNPLSTPQ (306 aa)) are N-terminal extension. TRAM domains follow at residues 28–89 (KLIP…KLIK) and 104–169 (ALTP…VATV).

It belongs to the universal ribosomal protein uS2 family.

The protein localises to the plastid. Its subcellular location is the chloroplast. This Chlamydomonas reinhardtii (Chlamydomonas smithii) protein is Small ribosomal subunit protein uS2c (rps2-1).